A 234-amino-acid chain; its full sequence is Homeobox protein ceh-51 (234 aa).

2 disordered regions span residues 128–154 and 209–234; these read PPSF…RTPF and QIKQ…HVIS. Positions 147–206 form a DNA-binding region, homeobox; that stretch reads RRGARTPFSDSQLYALRTRFEQCDTIKVDERRKLGAVIGLSPEQIKIWFQNRRFKLRKEK. Residues 220–234 show a composition bias toward basic and acidic residues; that stretch reads SAKEEAEEDQKHVIS.

It belongs to the NK-2 homeobox family.

It is found in the nucleus. In terms of biological role, required for mesoderm development, including specification of muscle and coelomocyte precursors. This chain is Homeobox protein ceh-51, found in Caenorhabditis elegans.